The sequence spans 501 residues: Cytochrome P450 71D6 (501 aa).

C442 contributes to the heme binding site.

The protein belongs to the cytochrome P450 family. Requires heme as cofactor.

The protein is Cytochrome P450 71D6 (CYP71D6) of Solanum chacoense (Chaco potato).